The primary structure comprises 317 residues: Acetyl-coenzyme A carboxylase carboxyl transferase subunit alpha (317 aa).

The region spanning 40-294 (RLQHKSQELT…KQQILADLAE (255 aa)) is the CoA carboxyltransferase C-terminal domain.

It belongs to the AccA family. As to quaternary structure, acetyl-CoA carboxylase is a heterohexamer composed of biotin carboxyl carrier protein (AccB), biotin carboxylase (AccC) and two subunits each of ACCase subunit alpha (AccA) and ACCase subunit beta (AccD).

The protein resides in the cytoplasm. It carries out the reaction N(6)-carboxybiotinyl-L-lysyl-[protein] + acetyl-CoA = N(6)-biotinyl-L-lysyl-[protein] + malonyl-CoA. Its pathway is lipid metabolism; malonyl-CoA biosynthesis; malonyl-CoA from acetyl-CoA: step 1/1. Functionally, component of the acetyl coenzyme A carboxylase (ACC) complex. First, biotin carboxylase catalyzes the carboxylation of biotin on its carrier protein (BCCP) and then the CO(2) group is transferred by the carboxyltransferase to acetyl-CoA to form malonyl-CoA. The protein is Acetyl-coenzyme A carboxylase carboxyl transferase subunit alpha of Haemophilus ducreyi (strain 35000HP / ATCC 700724).